Here is a 158-residue protein sequence, read N- to C-terminus: SsrA-binding protein (158 aa).

The disordered stretch occupies residues 130–158 (KGKKNHDKREAQAKRDWSRQKQRLLKDHG). The segment covering 136-158 (DKREAQAKRDWSRQKQRLLKDHG) has biased composition (basic and acidic residues).

Belongs to the SmpB family.

The protein localises to the cytoplasm. Required for rescue of stalled ribosomes mediated by trans-translation. Binds to transfer-messenger RNA (tmRNA), required for stable association of tmRNA with ribosomes. tmRNA and SmpB together mimic tRNA shape, replacing the anticodon stem-loop with SmpB. tmRNA is encoded by the ssrA gene; the 2 termini fold to resemble tRNA(Ala) and it encodes a 'tag peptide', a short internal open reading frame. During trans-translation Ala-aminoacylated tmRNA acts like a tRNA, entering the A-site of stalled ribosomes, displacing the stalled mRNA. The ribosome then switches to translate the ORF on the tmRNA; the nascent peptide is terminated with the 'tag peptide' encoded by the tmRNA and targeted for degradation. The ribosome is freed to recommence translation, which seems to be the essential function of trans-translation. The protein is SsrA-binding protein of Ruegeria sp. (strain TM1040) (Silicibacter sp.).